The primary structure comprises 629 residues: Forkhead box protein O (629 aa).

Thr49 is modified (phosphothreonine; by PKB/AKT1). Ser78 carries the phosphoserine modification. The segment at residues 98-204 (WGNLSYADLI…ETSRYEKRRG (107 aa)) is a DNA-binding region (fork-head). Disordered stretches follow at residues 185–208 (KSVRRRAASMETSRYEKRRGRAKK), 220–274 (GLND…SPIR), 321–368 (QQQF…QTLQ), 394–417 (SPNSVTTTMSPAYPNSEPSSDSLN), and 563–597 (QHLQQQQQQHHQHQQQLLLNNNNNNNNNNSSNSSL). At Ser193 the chain carries Phosphoserine; by PKB/AKT1. 2 stretches are compositionally biased toward polar residues: residues 224-233 (ATPSPSSSVS) and 259-268 (RASSNASSCG). A Phosphoserine; by PKB/AKT1 modification is found at Ser262. 3 positions are modified to phosphoserine: Ser265, Ser266, and Ser271. Residues 332-341 (SQPPPPPYQP) are compositionally biased toward pro residues. Residues 342-356 (PQLQQQQQQQPSYSL) are compositionally biased toward low complexity. Residues 394–403 (SPNSVTTTMS) show a composition bias toward polar residues.

Interacts with melt.

It localises to the cytoplasm. It is found in the nucleus. Transcription factor involved in the regulation of the insulin signaling pathway. Consistently activates both the downstream target Thor\d4EBP and the feedback control target InR. Involved in negative regulation of the cell cycle, modulating cell growth and proliferation. In response to cellular stresses, such as nutrient deprivation or increased levels of reactive oxygen species, foxo is activated and inhibits growth through the action of target genes such as Thor. Foxo activated in the adult fat body can regulate lifespan in adults; an insulin peptide itself may function as one secondary messenger of insulin-regulated aging. Also regulates Lip4, homolog of human acid lipases, thereby acting as a key modulator of lipid metabolism by insulin signaling and integrates insulin responses to glucose and lipid homeostasis. This Drosophila persimilis (Fruit fly) protein is Forkhead box protein O.